The sequence spans 471 residues: UDP-N-acetylmuramoylalanine--D-glutamate ligase (471 aa).

122-128 lines the ATP pocket; it reads GTNGKTT.

This sequence belongs to the MurCDEF family.

The protein resides in the cytoplasm. It carries out the reaction UDP-N-acetyl-alpha-D-muramoyl-L-alanine + D-glutamate + ATP = UDP-N-acetyl-alpha-D-muramoyl-L-alanyl-D-glutamate + ADP + phosphate + H(+). Its pathway is cell wall biogenesis; peptidoglycan biosynthesis. In terms of biological role, cell wall formation. Catalyzes the addition of glutamate to the nucleotide precursor UDP-N-acetylmuramoyl-L-alanine (UMA). This chain is UDP-N-acetylmuramoylalanine--D-glutamate ligase, found in Streptomyces coelicolor (strain ATCC BAA-471 / A3(2) / M145).